The chain runs to 794 residues: Phosphoribosylformylglycinamidine synthase subunit PurL (794 aa).

His47 is an active-site residue. ATP-binding residues include Tyr50 and Lys89. Glu91 serves as a coordination point for Mg(2+). Substrate-binding positions include 92–95 (SHNH) and Arg114. His93 (proton acceptor) is an active-site residue. Residue Asp115 coordinates Mg(2+). Gln238 provides a ligand contact to substrate. Asp266 contributes to the Mg(2+) binding site. 310–312 (ESQ) contributes to the substrate binding site. The ATP site is built by Asp522 and Gly559. Residue Asn560 coordinates Mg(2+). Ser562 contributes to the substrate binding site.

Belongs to the FGAMS family. As to quaternary structure, monomer. Part of the FGAM synthase complex composed of 1 PurL, 1 PurQ and 2 PurS subunits.

It is found in the cytoplasm. It catalyses the reaction N(2)-formyl-N(1)-(5-phospho-beta-D-ribosyl)glycinamide + L-glutamine + ATP + H2O = 2-formamido-N(1)-(5-O-phospho-beta-D-ribosyl)acetamidine + L-glutamate + ADP + phosphate + H(+). The protein operates within purine metabolism; IMP biosynthesis via de novo pathway; 5-amino-1-(5-phospho-D-ribosyl)imidazole from N(2)-formyl-N(1)-(5-phospho-D-ribosyl)glycinamide: step 1/2. Its function is as follows. Part of the phosphoribosylformylglycinamidine synthase complex involved in the purines biosynthetic pathway. Catalyzes the ATP-dependent conversion of formylglycinamide ribonucleotide (FGAR) and glutamine to yield formylglycinamidine ribonucleotide (FGAM) and glutamate. The FGAM synthase complex is composed of three subunits. PurQ produces an ammonia molecule by converting glutamine to glutamate. PurL transfers the ammonia molecule to FGAR to form FGAM in an ATP-dependent manner. PurS interacts with PurQ and PurL and is thought to assist in the transfer of the ammonia molecule from PurQ to PurL. This is Phosphoribosylformylglycinamidine synthase subunit PurL from Prochlorococcus marinus (strain MIT 9313).